Here is a 113-residue protein sequence, read N- to C-terminus: Small ribosomal subunit protein bS6 (113 aa).

It belongs to the bacterial ribosomal protein bS6 family.

In terms of biological role, binds together with bS18 to 16S ribosomal RNA. The sequence is that of Small ribosomal subunit protein bS6 from Ruthia magnifica subsp. Calyptogena magnifica.